The sequence spans 525 residues: CTP synthase (525 aa).

Residues 1-269 (MKYIIVTGGV…ADAITTHLHL (269 aa)) are amidoligase domain. CTP is bound at residue Ser-12. Ser-12 lines the UTP pocket. ATP is bound by residues 13–18 (GLGKGI) and Asp-70. 2 residues coordinate Mg(2+): Asp-70 and Glu-144. Residues 151-153 (DIE), 190-195 (KTKPTQ), and Lys-226 contribute to the CTP site. UTP is bound by residues 190–195 (KTKPTQ) and Lys-226. The Glutamine amidotransferase type-1 domain maps to 292–524 (VAIVSKYGIE…VSACRKNKKT (233 aa)). Position 348 (Gly-348) interacts with L-glutamine. Catalysis depends on Cys-375, which acts as the Nucleophile; for glutamine hydrolysis. Residues 376–379 (LGFQ), Glu-399, and Arg-454 each bind L-glutamine. Active-site residues include His-497 and Glu-499.

This sequence belongs to the CTP synthase family. Homotetramer.

It carries out the reaction UTP + L-glutamine + ATP + H2O = CTP + L-glutamate + ADP + phosphate + 2 H(+). The enzyme catalyses L-glutamine + H2O = L-glutamate + NH4(+). It catalyses the reaction UTP + NH4(+) + ATP = CTP + ADP + phosphate + 2 H(+). Its pathway is pyrimidine metabolism; CTP biosynthesis via de novo pathway; CTP from UDP: step 2/2. Allosterically activated by GTP, when glutamine is the substrate; GTP has no effect on the reaction when ammonia is the substrate. The allosteric effector GTP functions by stabilizing the protein conformation that binds the tetrahedral intermediate(s) formed during glutamine hydrolysis. Inhibited by the product CTP, via allosteric rather than competitive inhibition. In terms of biological role, catalyzes the ATP-dependent amination of UTP to CTP with either L-glutamine or ammonia as the source of nitrogen. Regulates intracellular CTP levels through interactions with the four ribonucleotide triphosphates. This Methanosphaerula palustris (strain ATCC BAA-1556 / DSM 19958 / E1-9c) protein is CTP synthase.